Consider the following 404-residue polypeptide: Cytochrome P450 monooxygenase avaI (404 aa).

Heme is bound at residue cysteine 382.

This sequence belongs to the cytochrome P450 family. It depends on heme as a cofactor.

It functions in the pathway secondary metabolite biosynthesis. Cytochrome P450 monooxygenase; part of the cluster that mediates the biosynthesis of a highly modified cyclo-arginine-tryptophan dipeptide (cRW). The first step of the pathway is perfornmed by the arginine-containing cyclodipeptide synthase (RCPDS) avaA that acts as the scaffold-generating enzyme and is responsible for formation of the cyclo-Arg-Trp (cRW) diketopiperazine. AvaB then acts as a multifunctional flavoenzyme that is responsible for generating the cyclo-Arg-formylkynurenine DKP, which can be deformylated by avaC. AvaB then further catalyzes an additional N-oxidation followed by cyclization and dehydration. The next step is an N-acetylation of the guanidine group catalyzed by the arginine N-acetyltransferase avaD. The roles of the additional enzymes identified within the ava cluster still have to be determined. The sequence is that of Cytochrome P450 monooxygenase avaI from Aspergillus versicolor.